The chain runs to 422 residues: L-threonine dehydratase biosynthetic IlvA (422 aa).

Lys56 is modified (N6-(pyridoxal phosphate)lysine). Pyridoxal 5'-phosphate is bound by residues Asn83, 189-193 (GGGGL), and Ser315. The ACT-like domain occupies 339-413 (HYFILNFPQR…FDPSNIYINE (75 aa)).

Belongs to the serine/threonine dehydratase family. Homotetramer. Pyridoxal 5'-phosphate is required as a cofactor.

The enzyme catalyses L-threonine = 2-oxobutanoate + NH4(+). It participates in amino-acid biosynthesis; L-isoleucine biosynthesis; 2-oxobutanoate from L-threonine: step 1/1. In terms of biological role, catalyzes the anaerobic formation of alpha-ketobutyrate and ammonia from threonine in a two-step reaction. The first step involved a dehydration of threonine and a production of enamine intermediates (aminocrotonate), which tautomerizes to its imine form (iminobutyrate). Both intermediates are unstable and short-lived. The second step is the nonenzymatic hydrolysis of the enamine/imine intermediates to form 2-ketobutyrate and free ammonia. In the low water environment of the cell, the second step is accelerated by RidA. The sequence is that of L-threonine dehydratase biosynthetic IlvA (ilvA) from Staphylococcus epidermidis (strain ATCC 12228 / FDA PCI 1200).